The chain runs to 477 residues: Aspartyl/glutamyl-tRNA(Asn/Gln) amidotransferase subunit B (477 aa).

Belongs to the GatB/GatE family. GatB subfamily. Heterotrimer of A, B and C subunits.

It carries out the reaction L-glutamyl-tRNA(Gln) + L-glutamine + ATP + H2O = L-glutaminyl-tRNA(Gln) + L-glutamate + ADP + phosphate + H(+). It catalyses the reaction L-aspartyl-tRNA(Asn) + L-glutamine + ATP + H2O = L-asparaginyl-tRNA(Asn) + L-glutamate + ADP + phosphate + 2 H(+). Functionally, allows the formation of correctly charged Asn-tRNA(Asn) or Gln-tRNA(Gln) through the transamidation of misacylated Asp-tRNA(Asn) or Glu-tRNA(Gln) in organisms which lack either or both of asparaginyl-tRNA or glutaminyl-tRNA synthetases. The reaction takes place in the presence of glutamine and ATP through an activated phospho-Asp-tRNA(Asn) or phospho-Glu-tRNA(Gln). This chain is Aspartyl/glutamyl-tRNA(Asn/Gln) amidotransferase subunit B, found in Clostridium tetani (strain Massachusetts / E88).